A 287-amino-acid polypeptide reads, in one-letter code: MALTEDKSDSDGRRWGKFKLPFRNSNSQAPSASSSSSMATSSSSVTSSHLNQNYIHQSRHFQYHGPPVVEGLGQNHHQSAATIPSMSSVARSLLPTKRRLKLDPSAKLYFPYEPGKQVRSAIKIKNTSKSHVAFKFQTTVPKSCFMRPAGAILAPGEEIIATVFKFVEPPENNEKPMEQKSGVKFKIMSLKMKVPTDYMPELFEEQKDHVSEEQVMRVVFLDPENPNSMMEKLKSQLAEADAADEARKKASEGIVGPKPIGEGLVIDEWKQRRERYLAQQQGGVDAA.

Residues 1–14 are compositionally biased toward basic and acidic residues; the sequence is MALTEDKSDSDGRR. The disordered stretch occupies residues 1 to 45; it reads MALTEDKSDSDGRRWGKFKLPFRNSNSQAPSASSSSSMATSSSSV. Residues 25–45 are compositionally biased toward low complexity; the sequence is SNSQAPSASSSSSMATSSSSV. One can recognise an MSP domain in the interval 99 to 221; that stretch reads RLKLDPSAKL…EEQVMRVVFL (123 aa).

Belongs to the VAMP-associated protein (VAP) (TC 9.B.17) family.

May play a role in vesicle trafficking. The polypeptide is Vesicle-associated protein 4-3 (PVA43) (Arabidopsis thaliana (Mouse-ear cress)).